A 257-amino-acid chain; its full sequence is MSSAPNGRKKRPSRSTRSSIFQISKPPLQSGDWERRGSGSESAHKTQRALDDCKMLVQEFNTQVALYRELVISIGDVSVSCPSLRAEMHKTRTKGCEMARQAHQKLAAISGPEDGEIHPEICRLYIQLQCCLEMYTTEMLKSICLLGSLQFHRKGKEASGGAKSLDSKIEENAETPALEDSLSSPLDSQQQSWQVATDIENTERDMREMKNLLSKLRETMPLPLKNQDDSSLLNLTPYPMVRRRKRRFFGLCCLVSS.

Disordered regions lie at residues 1-45 (MSSA…SAHK) and 172-191 (NAETPALEDSLSSPLDSQQQ). Residues 32–45 (DWERRGSGSESAHK) show a composition bias toward basic and acidic residues. Residues 180–191 (DSLSSPLDSQQQ) are compositionally biased toward low complexity. Residues 242 to 247 (RRRKRR) carry the Nuclear localization signal motif. Residues cysteine 252 and cysteine 253 are each lipidated (S-palmitoyl cysteine).

This sequence belongs to the RGS7BP/RGS9BP family. As to quaternary structure, interacts with 'R7' family proteins RGS6, RGS7, RGS9 and RGS11. Component of some R7-Gbeta5 complex composed of some R7 protein (RGS6, RGS7, RGS9 or RGS11), Gbeta5 (GNB5) and RGS7BP. Palmitoylated. Undergoes rapid palmitoylation turnover. De novo and turnover palmitoylation are both mediated by ZDHHC2. Palmitoylation regulates the cell membrane and nuclear shuttling and the regulation of GPCR signaling. Upon depalmitoylation, it is targeted from the plasma membrane into the nucleus. GPCR signaling inhibits depalmitoylation and promotes localization to the plasma membrane.

It is found in the nucleus. It localises to the cytoplasm. Its subcellular location is the cell membrane. In terms of biological role, regulator of G protein-coupled receptor (GPCR) signaling. Regulatory subunit of the R7-Gbeta5 complexes that acts by controlling the subcellular location of the R7-Gbeta5 complexes. When palmitoylated, it targets the R7-Gbeta5 complexes to the plasma membrane, leading to inhibit G protein alpha subunits. When it is unpalmitoylated, the R7-Gbeta5 complexes undergo a nuclear/cytoplasmic shuttling. May also act by controlling the proteolytic stability of R7 proteins, probably by protecting them from degradation. The sequence is that of Regulator of G-protein signaling 7-binding protein (Rgs7bp) from Rattus norvegicus (Rat).